The sequence spans 526 residues: Peptide chain release factor 3 (526 aa).

In terms of domain architecture, tr-type G spans 8-277 (SKRRTFAIIS…GLTRWAPAPQ (270 aa)). Residues 17 to 24 (SHPDAGKT), 85 to 89 (DTPGH), and 139 to 142 (NKLD) each bind GTP.

The protein belongs to the TRAFAC class translation factor GTPase superfamily. Classic translation factor GTPase family. PrfC subfamily.

It is found in the cytoplasm. Increases the formation of ribosomal termination complexes and stimulates activities of RF-1 and RF-2. It binds guanine nucleotides and has strong preference for UGA stop codons. It may interact directly with the ribosome. The stimulation of RF-1 and RF-2 is significantly reduced by GTP and GDP, but not by GMP. In Vibrio atlanticus (strain LGP32) (Vibrio splendidus (strain Mel32)), this protein is Peptide chain release factor 3.